The sequence spans 25 residues: Xenoposin precursor fragment BM1 (25 aa).

Expressed by the skin glands.

The protein resides in the secreted. In terms of biological role, antimicrobial peptide. The chain is Xenoposin precursor fragment BM1 from Xenopus boumbaensis (Mawa clawed frog).